A 419-amino-acid polypeptide reads, in one-letter code: Protein-lysine N-methyltransferase EFM2 (419 aa).

Residues Trp-222, 261-263 (GAG), Asp-290, Trp-318, and Ala-340 each bind S-adenosyl-L-methionine.

It belongs to the class I-like SAM-binding methyltransferase superfamily. METTL21 family.

The protein localises to the cytoplasm. S-adenosyl-L-methionine-dependent protein-lysine N-methyltransferase that mono- and dimethylates elongation factor 2 (EFT1/EFT2) at 'Lys-613' and methylates elongation factor 3A (YEF3). The protein is Protein-lysine N-methyltransferase EFM2 of Saccharomyces cerevisiae (strain ATCC 204508 / S288c) (Baker's yeast).